Consider the following 190-residue polypeptide: ADP-ribosylation factor-like protein 6 (190 aa).

A lipid anchor (N-myristoyl glycine) is attached at glycine 2. GTP is bound by residues 24-31 (GLDNSGKT), 69-73 (DMAGQ), and 130-133 (NKMD).

Belongs to the small GTPase superfamily. Arf family. As to expression, specifically expressed in ciliated cells.

It is found in the cytoplasm. The sequence is that of ADP-ribosylation factor-like protein 6 from Caenorhabditis elegans.